We begin with the raw amino-acid sequence, 353 residues long: Inactive ubiquitin thioesterase OTULINL (353 aa).

The segment at 1-80 (MKATRSAPRE…KWWIGYLQRK (80 aa)) is required for membrane binding. Residues 125-353 (KCVRPVKRDN…NDHQYHIPVF (229 aa)) form the OTU domain.

The protein belongs to the peptidase C65 family. Otulin subfamily. Does not bind ubiquitin or ubiquitin-like proteins.

The protein localises to the cytoplasm. The protein resides in the endoplasmic reticulum membrane. It is found in the nucleus envelope. Its function is as follows. Lacks deubiquitinase activity. In Rattus norvegicus (Rat), this protein is Inactive ubiquitin thioesterase OTULINL.